Reading from the N-terminus, the 270-residue chain is Formamidopyrimidine-DNA glycosylase (270 aa).

Proline 2 functions as the Schiff-base intermediate with DNA in the catalytic mechanism. The active-site Proton donor is the glutamate 3. Lysine 58 acts as the Proton donor; for beta-elimination activity in catalysis. Residues histidine 91, arginine 110, and lysine 151 each coordinate DNA. An FPG-type zinc finger spans residues 236-270; it reads FVYGRGGEACKVCGTELRNVVLGQRASVFCPRCQR. The active-site Proton donor; for delta-elimination activity is the arginine 260.

This sequence belongs to the FPG family. In terms of assembly, monomer. It depends on Zn(2+) as a cofactor.

It catalyses the reaction Hydrolysis of DNA containing ring-opened 7-methylguanine residues, releasing 2,6-diamino-4-hydroxy-5-(N-methyl)formamidopyrimidine.. It carries out the reaction 2'-deoxyribonucleotide-(2'-deoxyribose 5'-phosphate)-2'-deoxyribonucleotide-DNA = a 3'-end 2'-deoxyribonucleotide-(2,3-dehydro-2,3-deoxyribose 5'-phosphate)-DNA + a 5'-end 5'-phospho-2'-deoxyribonucleoside-DNA + H(+). Functionally, involved in base excision repair of DNA damaged by oxidation or by mutagenic agents. Acts as a DNA glycosylase that recognizes and removes damaged bases. Has a preference for oxidized purines, such as 7,8-dihydro-8-oxoguanine (8-oxoG). Has AP (apurinic/apyrimidinic) lyase activity and introduces nicks in the DNA strand. Cleaves the DNA backbone by beta-delta elimination to generate a single-strand break at the site of the removed base with both 3'- and 5'-phosphates. The polypeptide is Formamidopyrimidine-DNA glycosylase (Pseudomonas fluorescens (strain SBW25)).